Consider the following 660-residue polypeptide: Bifunctional polymyxin resistance protein ArnA (660 aa).

The interval 1–304 (MKAVVFAYHD…TLGLVEGSRL (304 aa)) is formyltransferase ArnAFT. Histidine 104 (proton donor; for formyltransferase activity) is an active-site residue. Residues arginine 114 and 136 to 140 (VAKAD) contribute to the (6R)-10-formyltetrahydrofolate site. The interval 314 to 660 (RRTRVLILGV…RTVDIVEKSS (347 aa)) is dehydrogenase ArnADH. Residues aspartate 347 and 368–369 (DI) each bind NAD(+). Residues alanine 393, tyrosine 398, and 432-433 (TS) each bind UDP-alpha-D-glucuronate. Glutamate 434 (proton acceptor; for decarboxylase activity) is an active-site residue. Residues arginine 460, asparagine 492, 526–535 (KLIDGGKQKR), and tyrosine 613 each bind UDP-alpha-D-glucuronate. Arginine 619 acts as the Proton donor; for decarboxylase activity in catalysis.

The protein in the N-terminal section; belongs to the Fmt family. UDP-L-Ara4N formyltransferase subfamily. In the C-terminal section; belongs to the NAD(P)-dependent epimerase/dehydratase family. UDP-glucuronic acid decarboxylase subfamily. Homohexamer, formed by a dimer of trimers.

The catalysed reaction is UDP-alpha-D-glucuronate + NAD(+) = UDP-beta-L-threo-pentopyranos-4-ulose + CO2 + NADH. It catalyses the reaction UDP-4-amino-4-deoxy-beta-L-arabinose + (6R)-10-formyltetrahydrofolate = UDP-4-deoxy-4-formamido-beta-L-arabinose + (6S)-5,6,7,8-tetrahydrofolate + H(+). Its pathway is nucleotide-sugar biosynthesis; UDP-4-deoxy-4-formamido-beta-L-arabinose biosynthesis; UDP-4-deoxy-4-formamido-beta-L-arabinose from UDP-alpha-D-glucuronate: step 1/3. It participates in nucleotide-sugar biosynthesis; UDP-4-deoxy-4-formamido-beta-L-arabinose biosynthesis; UDP-4-deoxy-4-formamido-beta-L-arabinose from UDP-alpha-D-glucuronate: step 3/3. The protein operates within bacterial outer membrane biogenesis; lipopolysaccharide biosynthesis. Its function is as follows. Bifunctional enzyme that catalyzes the oxidative decarboxylation of UDP-glucuronic acid (UDP-GlcUA) to UDP-4-keto-arabinose (UDP-Ara4O) and the addition of a formyl group to UDP-4-amino-4-deoxy-L-arabinose (UDP-L-Ara4N) to form UDP-L-4-formamido-arabinose (UDP-L-Ara4FN). The modified arabinose is attached to lipid A and is required for resistance to polymyxin and cationic antimicrobial peptides. The polypeptide is Bifunctional polymyxin resistance protein ArnA (Escherichia fergusonii (strain ATCC 35469 / DSM 13698 / CCUG 18766 / IAM 14443 / JCM 21226 / LMG 7866 / NBRC 102419 / NCTC 12128 / CDC 0568-73)).